We begin with the raw amino-acid sequence, 171 residues long: Putative F-box protein At1g32020 (171 aa).

In terms of domain architecture, F-box spans C3–K49.

The chain is Putative F-box protein At1g32020 from Arabidopsis thaliana (Mouse-ear cress).